A 340-amino-acid polypeptide reads, in one-letter code: Protein-arginine kinase (340 aa).

The Phosphagen kinase C-terminal domain maps to 21 to 242 (VVLSSRIRLA…EQIIMQERIA (222 aa)). ATP contacts are provided by residues 24-28 (SSRIR), histidine 79, arginine 113, 164-168 (RASVM), and 195-200 (RGIYGE).

Belongs to the ATP:guanido phosphotransferase family.

It carries out the reaction L-arginyl-[protein] + ATP = N(omega)-phospho-L-arginyl-[protein] + ADP + H(+). Catalyzes the specific phosphorylation of arginine residues in proteins. This Listeria monocytogenes serotype 4a (strain HCC23) protein is Protein-arginine kinase.